Consider the following 109-residue polypeptide: Ubiquitin-related modifier 1 homolog (109 aa).

At Gly-109 the chain carries 1-thioglycine. Gly-109 is covalently cross-linked (Glycyl lysine isopeptide (Gly-Lys) (interchain with K-? in acceptor proteins)).

This sequence belongs to the URM1 family. C-terminal thiocarboxylation occurs in 2 steps, it is first acyl-adenylated (-COAMP) via the hesA/moeB/thiF part of the MOCS3 homolog, then thiocarboxylated (-COSH) via the rhodanese domain of the MOCS3 homolog.

Its subcellular location is the cytoplasm. The protein operates within tRNA modification; 5-methoxycarbonylmethyl-2-thiouridine-tRNA biosynthesis. Functionally, acts as a sulfur carrier required for 2-thiolation of mcm(5)S(2)U at tRNA wobble positions of cytosolic tRNA(Lys), tRNA(Glu) and tRNA(Gln). Serves as sulfur donor in tRNA 2-thiolation reaction by being thiocarboxylated (-COSH) at its C-terminus by MOCS3. The sulfur is then transferred to tRNA to form 2-thiolation of mcm(5)S(2)U. Also acts as a ubiquitin-like protein (UBL) that is covalently conjugated via an isopeptide bond to lysine residues of target proteins. The thiocarboxylated form serves as substrate for conjugation and oxidative stress specifically induces the formation of UBL-protein conjugates. This is Ubiquitin-related modifier 1 homolog from Culex quinquefasciatus (Southern house mosquito).